The sequence spans 264 residues: NAD kinase 1 (264 aa).

D45 acts as the Proton acceptor in catalysis. Residues 45-46 (DG), G46, 122-123 (NE), R148, D150, S158, 161-166 (TAYNKS), and H223 each bind NAD(+).

Belongs to the NAD kinase family. In terms of assembly, homotetramer. Requires a divalent metal cation as cofactor.

The protein resides in the cytoplasm. The catalysed reaction is NAD(+) + ATP = ADP + NADP(+) + H(+). Competitively inhibited by 5'-thioacetyladenosine (TAA) and di-(5'-thioadenosine) (DTA). Its function is as follows. Involved in the regulation of the intracellular balance of NAD and NADP, and is a key enzyme in the biosynthesis of NADP. Catalyzes specifically the phosphorylation on 2'-hydroxyl of the adenosine moiety of NAD to yield NADP. This is NAD kinase 1 from Listeria monocytogenes serovar 1/2a (strain ATCC BAA-679 / EGD-e).